The chain runs to 319 residues: Probable cell division protein WhiA (319 aa).

The segment at residues 277 to 310 (SLEELGKLAEPAMTKDAIAGRIRRLLCLADKRAK) is a DNA-binding region (H-T-H motif).

Belongs to the WhiA family.

Involved in cell division and chromosome segregation. This is Probable cell division protein WhiA from Tropheryma whipplei (strain Twist) (Whipple's bacillus).